The primary structure comprises 289 residues: Inorganic pyrophosphatase (289 aa).

Arg80 contributes to the diphosphate binding site. The Mg(2+) site is built by Asp117, Asp122, and Asp154.

The protein belongs to the PPase family. As to quaternary structure, homodimer. Mg(2+) is required as a cofactor.

Its subcellular location is the cytoplasm. It carries out the reaction diphosphate + H2O = 2 phosphate + H(+). This Schizosaccharomyces pombe (strain 972 / ATCC 24843) (Fission yeast) protein is Inorganic pyrophosphatase (ppa1).